The primary structure comprises 171 residues: 3-hydroxydecanoyl-[acyl-carrier-protein] dehydratase (171 aa).

The active site involves His70.

The protein belongs to the thioester dehydratase family. FabA subfamily. Homodimer.

It is found in the cytoplasm. It carries out the reaction a (3R)-hydroxyacyl-[ACP] = a (2E)-enoyl-[ACP] + H2O. The catalysed reaction is (3R)-hydroxydecanoyl-[ACP] = (2E)-decenoyl-[ACP] + H2O. It catalyses the reaction (2E)-decenoyl-[ACP] = (3Z)-decenoyl-[ACP]. The protein operates within lipid metabolism; fatty acid biosynthesis. In terms of biological role, necessary for the introduction of cis unsaturation into fatty acids. Catalyzes the dehydration of (3R)-3-hydroxydecanoyl-ACP to E-(2)-decenoyl-ACP and then its isomerization to Z-(3)-decenoyl-ACP. Can catalyze the dehydratase reaction for beta-hydroxyacyl-ACPs with saturated chain lengths up to 16:0, being most active on intermediate chain length. In Shewanella baltica (strain OS223), this protein is 3-hydroxydecanoyl-[acyl-carrier-protein] dehydratase.